Here is a 185-residue protein sequence, read N- to C-terminus: Anaphase-promoting complex subunit 10 (185 aa).

Thr-2 bears the N-acetylthreonine mark. Residues 2-185 form the DOC domain; that stretch reads TTPNKTPPGA…IDFMMYRSIR (184 aa). Lys-169 bears the N6-acetyllysine mark.

It belongs to the APC10 family. As to quaternary structure, the mammalian APC/C is composed at least of 14 distinct subunits ANAPC1, ANAPC2, CDC27/APC3, ANAPC4, ANAPC5, CDC16/APC6, ANAPC7, CDC23/APC8, ANAPC10, ANAPC11, CDC26/APC12, ANAPC13, ANAPC15 and ANAPC16 that assemble into a complex of at least 19 chains with a combined molecular mass of around 1.2 MDa; APC/C interacts with FZR1 and FBXO5. The C-terminus of APC10 binds to CDC27/APC3. Interacts with PIWIL1; interaction only takes place when PIWIL1 binds piRNA. Interacts with FBXO43; the interaction is direct.

Its pathway is protein modification; protein ubiquitination. Functionally, component of the anaphase promoting complex/cyclosome (APC/C), a cell cycle-regulated E3 ubiquitin ligase that controls progression through mitosis and the G1 phase of the cell cycle. The APC/C complex acts by mediating ubiquitination and subsequent degradation of target proteins: it mainly mediates the formation of 'Lys-11'-linked polyubiquitin chains and, to a lower extent, the formation of 'Lys-48'- and 'Lys-63'-linked polyubiquitin chains. The APC/C complex catalyzes assembly of branched 'Lys-11'-/'Lys-48'-linked branched ubiquitin chains on target proteins. This Homo sapiens (Human) protein is Anaphase-promoting complex subunit 10 (ANAPC10).